Consider the following 491-residue polypeptide: Large ribosomal subunit protein mL101 (rPPR4) (491 aa).

PPR repeat units follow at residues 122-156 (TELT…NITP), 157-191 (SSMS…NVMP), 192-226 (DSYT…GRVA), 228-262 (DWTT…NTQR), 263-293 (DFTA…LRLA), 298-328 (SNVA…WQAN), 333-367 (DIRI…GGKL), and 368-402 (NAKT…GKGD).

Belongs to the PPR family. P subfamily. In terms of assembly, component of the mitochondrial ribosome large subunit.

The protein resides in the mitochondrion. In Arabidopsis thaliana (Mouse-ear cress), this protein is Large ribosomal subunit protein mL101 (rPPR4).